Here is a 106-residue protein sequence, read N- to C-terminus: Toxin-like structure LSTX-D5 (106 aa).

Positions 1–20 (MMKVLVVVALLVTLISYSSS) are cleaved as a signal peptide. The propeptide occupies 21–41 (EGIDDLETDELLSLMANEQTR). Cystine bridges form between Cys45–Cys60, Cys52–Cys69, Cys59–Cys85, and Cys71–Cys83.

It belongs to the neurotoxin 19 (CSTX) family. 02 (D7) subfamily. As to expression, expressed by the venom gland.

Its subcellular location is the secreted. The protein is Toxin-like structure LSTX-D5 of Lycosa singoriensis (Wolf spider).